A 447-amino-acid polypeptide reads, in one-letter code: Oxysterols receptor LXR-alpha (447 aa).

The segment at Met-1–Pro-88 is disordered. Residues Met-1 to Glu-96 form a transactivation AF-1; required for ligand-independent transactivation function region. A DNA-binding region (nuclear receptor) is located at residues Asn-95–Ser-170. NR C4-type zinc fingers lie at residues Cys-98–Cys-118 and Cys-134–Cys-158. The disordered stretch occupies residues Lys-178–Leu-203. The segment covering Ala-187 to Leu-203 has biased composition (low complexity). Positions Gln-205–Glu-447 are transactivation AF-2; required for ligand-dependent transactivation function; mediates interaction with CCAR2. Residues Glu-209–Glu-447 form the NR LBD domain.

Belongs to the nuclear hormone receptor family. NR1 subfamily. In terms of assembly, heterodimer of NR1H3 and RXR (retinoic acid receptor). Interacts with CCAR2 (via N-terminus) in a ligand-independent manner. Interacts with SIRT1 and this interaction is inhibited by CCAR2. In terms of processing, ubiquitinated by UBR5, leading to its degradation: UBR5 specifically recognizes and binds ligand-bound NR1H3 when it is not associated with coactivators (NCOAs). In presence of NCOAs, the UBR5-degron is not accessible, preventing its ubiquitination and degradation.

It is found in the nucleus. It localises to the cytoplasm. In terms of biological role, nuclear receptor that exhibits a ligand-dependent transcriptional activation activity. Interaction with retinoic acid receptor (RXR) shifts RXR from its role as a silent DNA-binding partner to an active ligand-binding subunit in mediating retinoid responses through target genes defined by LXRES. LXRES are DR4-type response elements characterized by direct repeats of two similar hexanuclotide half-sites spaced by four nucleotides. Plays an important role in the regulation of cholesterol homeostasis, regulating cholesterol uptake through MYLIP-dependent ubiquitination of LDLR, VLDLR and LRP8. Interplays functionally with RORA for the regulation of genes involved in liver metabolism. Induces LPCAT3-dependent phospholipid remodeling in endoplasmic reticulum (ER) membranes of hepatocytes, driving SREBF1 processing and lipogenesis. Via LPCAT3, triggers the incorporation of arachidonate into phosphatidylcholines of ER membranes, increasing membrane dynamics and enabling triacylglycerols transfer to nascent very low-density lipoprotein (VLDL) particles. Via LPCAT3 also counteracts lipid-induced ER stress response and inflammation, likely by modulating SRC kinase membrane compartmentalization and limiting the synthesis of lipid inflammatory mediators. This is Oxysterols receptor LXR-alpha (NR1H3) from Bos taurus (Bovine).